The chain runs to 80 residues: Toxin Acra I-3 (80 aa).

The N-terminal stretch at 1–22 (MMKLVLLSVIVILFSLIGSIHG) is a signal peptide. The region spanning 25-80 (VPGNYPLDSSGNKYPCTVLGDNQSCIDVCKKHGVKYGYCYGFKCWCEYLKDKNVSL) is the LCN-type CS-alpha/beta domain. 3 disulfide bridges follow: C40-C63, C49-C68, and C53-C70.

This sequence belongs to the long (3 C-C) scorpion toxin superfamily. Sodium/Potassium channel inhibitor family. As to expression, expressed by the venom gland.

It localises to the secreted. Its function is as follows. Probable neurotoxin that inhibits ion channels. Is toxic to mice. The protein is Toxin Acra I-3 of Androctonus crassicauda (Arabian fat-tailed scorpion).